The sequence spans 877 residues: Clumping factor B (877 aa).

An N-terminal signal peptide occupies residues 1-44 (MKKRIDYLSNKQNKYSIRRFTVGTTSVIVGATILFGIGNHQAQA). Positions 15-26 (YSIRRFTVGTTS) match the YSIRK-G/S signaling motif motif. Composition is skewed to polar residues over residues 44–61 (ASEQ…NASA) and 68–95 (MIET…NVDS). The segment at 44 to 192 (ASEQSNDTTQ…QGTSKPSVRT (149 aa)) is disordered. A ligand binding A region region spans residues 45 to 542 (SEQSNDTTQS…GSADGDSAVN (498 aa)). Residues 96 to 119 (TTKPMSTQTSNTTTTEPASTNETP) show a composition bias toward low complexity. Residues 120-189 (QPTAIKNQAT…SNAQGTSKPS (70 aa)) show a composition bias toward polar residues. The MIDAS-like motif motif lies at 272–276 (DYSNS). The segment at 530 to 849 (YGGGSADGDS…ETGDKSENTN (320 aa)) is disordered. The segment covering 545–555 (DPTPGPPVDPE) has biased composition (pro residues). Residues 556-801 (PSPDPEPEPT…SDSDSDSDSD (246 aa)) are compositionally biased toward acidic residues. Polar residues predominate over residues 805-816 (RVTPPNNEQKAP). A compositionally biased stretch (basic and acidic residues) spans 833-846 (HKTDALPETGDKSE). The LPXTG sorting signal signature appears at 838-842 (LPETG). The residue at position 841 (Thr-841) is a Pentaglycyl murein peptidoglycan amidated threonine. Residues 842 to 877 (GDKSENTNATLFGAMMALLGSLLLFRKRKQDHKEKA) constitute a propeptide, removed by sortase.

Belongs to the serine-aspartate repeat-containing protein (SDr) family. In terms of processing, proteolytically cleaved by aureolysin (aur). This cleavage leads to the inactivation of ClfB.

The protein localises to the secreted. It is found in the cell wall. Cell surface-associated protein implicated in virulence by promoting bacterial attachment to both alpha- and beta-chains of human fibrinogen and inducing the formation of bacterial clumps. Partly responsible for mediating bacterial attachment to the highly keratinized squamous epithelial cells from the nasal cavity via an interaction with cytokeratin K10 (K10). Also promotes bacterial attachment to cultured keratinocytes, possibly through an interaction with cytokeratin K10. Binds mouse cytokeratin K10. Activates human platelet aggregation. The polypeptide is Clumping factor B (clfB) (Staphylococcus aureus (strain NCTC 8325 / PS 47)).